The following is a 193-amino-acid chain: NADH-quinone oxidoreductase subunit B (193 aa).

The [4Fe-4S] cluster site is built by Cys72, Cys73, Cys137, and Cys167.

This sequence belongs to the complex I 20 kDa subunit family. As to quaternary structure, NDH-1 is composed of 14 different subunits. Subunits NuoB, C, D, E, F, and G constitute the peripheral sector of the complex. [4Fe-4S] cluster is required as a cofactor.

The protein localises to the cell inner membrane. The enzyme catalyses a quinone + NADH + 5 H(+)(in) = a quinol + NAD(+) + 4 H(+)(out). Functionally, NDH-1 shuttles electrons from NADH, via FMN and iron-sulfur (Fe-S) centers, to quinones in the respiratory chain. The immediate electron acceptor for the enzyme in this species is believed to be ubiquinone. Couples the redox reaction to proton translocation (for every two electrons transferred, four hydrogen ions are translocated across the cytoplasmic membrane), and thus conserves the redox energy in a proton gradient. This chain is NADH-quinone oxidoreductase subunit B, found in Bartonella quintana (strain Toulouse) (Rochalimaea quintana).